Consider the following 353-residue polypeptide: Photosystem II D2 protein (353 aa).

Thr2 is modified (N-acetylthreonine). At Thr2 the chain carries Phosphothreonine. A helical membrane pass occupies residues 41–61 (CAYFALGGWFTGTTFVTSWYT). His118 lines the chlorophyll a pocket. Residues 125 to 141 (GFMLRQFELARSVQLRP) traverse the membrane as a helical segment. Residues Gln130 and Asn143 each contribute to the pheophytin a site. A helical membrane pass occupies residues 153–166 (VFVSVFLIYPLGQS). Residue His198 coordinates chlorophyll a. A helical membrane pass occupies residues 208-228 (AALLCAIHGATVENTLFEDGD). His215 and Phe262 together coordinate a plastoquinone. His215 contacts Fe cation. His269 contacts Fe cation. A helical membrane pass occupies residues 279–295 (GLWMSALGVVGLALNLR).

The protein belongs to the reaction center PufL/M/PsbA/D family. As to quaternary structure, PSII is composed of 1 copy each of membrane proteins PsbA, PsbB, PsbC, PsbD, PsbE, PsbF, PsbH, PsbI, PsbJ, PsbK, PsbL, PsbM, PsbT, PsbX, PsbY, PsbZ, Psb30/Ycf12, at least 3 peripheral proteins of the oxygen-evolving complex and a large number of cofactors. It forms dimeric complexes. Interacts with PAM68. The cofactor is The D1/D2 heterodimer binds P680, chlorophylls that are the primary electron donor of PSII, and subsequent electron acceptors. It shares a non-heme iron and each subunit binds pheophytin, quinone, additional chlorophylls, carotenoids and lipids. There is also a Cl(-1) ion associated with D1 and D2, which is required for oxygen evolution. The PSII complex binds additional chlorophylls, carotenoids and specific lipids.. Phosphorylation occurs in normal plant growth light conditions. Rapid dephosphorylation occurs during heat shock.

It localises to the plastid. The protein localises to the chloroplast thylakoid membrane. It catalyses the reaction 2 a plastoquinone + 4 hnu + 2 H2O = 2 a plastoquinol + O2. Functionally, photosystem II (PSII) is a light-driven water:plastoquinone oxidoreductase that uses light energy to abstract electrons from H(2)O, generating O(2) and a proton gradient subsequently used for ATP formation. It consists of a core antenna complex that captures photons, and an electron transfer chain that converts photonic excitation into a charge separation. The D1/D2 (PsbA/PsbD) reaction center heterodimer binds P680, the primary electron donor of PSII as well as several subsequent electron acceptors. D2 is needed for assembly of a stable PSII complex. This is Photosystem II D2 protein from Arabidopsis thaliana (Mouse-ear cress).